Consider the following 322-residue polypeptide: Ribose-phosphate pyrophosphokinase 1 (322 aa).

ATP is bound by residues Asp39–Glu41 and Arg98–Gln99. Residues His132 and Asp173 each contribute to the Mg(2+) site. Lys196 is an active-site residue. D-ribose 5-phosphate is bound by residues Arg198, Asp224, and Asp228–Thr232.

Belongs to the ribose-phosphate pyrophosphokinase family. Class I subfamily. In terms of assembly, homohexamer. It depends on Mg(2+) as a cofactor.

The protein resides in the cytoplasm. It carries out the reaction D-ribose 5-phosphate + ATP = 5-phospho-alpha-D-ribose 1-diphosphate + AMP + H(+). Its pathway is metabolic intermediate biosynthesis; 5-phospho-alpha-D-ribose 1-diphosphate biosynthesis; 5-phospho-alpha-D-ribose 1-diphosphate from D-ribose 5-phosphate (route I): step 1/1. In terms of biological role, involved in the biosynthesis of the central metabolite phospho-alpha-D-ribosyl-1-pyrophosphate (PRPP) via the transfer of pyrophosphoryl group from ATP to 1-hydroxyl of ribose-5-phosphate (Rib-5-P). The sequence is that of Ribose-phosphate pyrophosphokinase 1 from Streptococcus pneumoniae serotype 4 (strain ATCC BAA-334 / TIGR4).